The following is a 501-amino-acid chain: Glycerol kinase (501 aa).

Threonine 16 contacts ADP. Threonine 16, threonine 17, and serine 18 together coordinate ATP. Residue threonine 16 participates in sn-glycerol 3-phosphate binding. Arginine 20 contacts ADP. Sn-glycerol 3-phosphate is bound by residues arginine 84, glutamate 85, tyrosine 135, and aspartate 242. Positions 84, 85, 135, 242, and 243 each coordinate glycerol. ADP contacts are provided by threonine 264 and glycine 307. ATP contacts are provided by threonine 264, glycine 307, glutamine 311, and glycine 408. Glycine 408 provides a ligand contact to ADP.

Belongs to the FGGY kinase family.

The catalysed reaction is glycerol + ATP = sn-glycerol 3-phosphate + ADP + H(+). It functions in the pathway polyol metabolism; glycerol degradation via glycerol kinase pathway; sn-glycerol 3-phosphate from glycerol: step 1/1. Its function is as follows. Key enzyme in the regulation of glycerol uptake and metabolism. Catalyzes the phosphorylation of glycerol to yield sn-glycerol 3-phosphate. The protein is Glycerol kinase of Saccharolobus islandicus (strain M.16.27) (Sulfolobus islandicus).